The sequence spans 212 residues: Thiamine-phosphate synthase (212 aa).

4-amino-2-methyl-5-(diphosphooxymethyl)pyrimidine is bound by residues 40 to 44 (QFREK) and Asn-75. Mg(2+) contacts are provided by Asp-76 and Asp-95. Ser-113 contacts 4-amino-2-methyl-5-(diphosphooxymethyl)pyrimidine. 139–141 (TPS) is a binding site for 2-[(2R,5Z)-2-carboxy-4-methylthiazol-5(2H)-ylidene]ethyl phosphate. 4-amino-2-methyl-5-(diphosphooxymethyl)pyrimidine is bound at residue Lys-142. 2-[(2R,5Z)-2-carboxy-4-methylthiazol-5(2H)-ylidene]ethyl phosphate-binding positions include Gly-171 and 191 to 192 (IS).

This sequence belongs to the thiamine-phosphate synthase family. Mg(2+) is required as a cofactor.

The enzyme catalyses 2-[(2R,5Z)-2-carboxy-4-methylthiazol-5(2H)-ylidene]ethyl phosphate + 4-amino-2-methyl-5-(diphosphooxymethyl)pyrimidine + 2 H(+) = thiamine phosphate + CO2 + diphosphate. The catalysed reaction is 2-(2-carboxy-4-methylthiazol-5-yl)ethyl phosphate + 4-amino-2-methyl-5-(diphosphooxymethyl)pyrimidine + 2 H(+) = thiamine phosphate + CO2 + diphosphate. It carries out the reaction 4-methyl-5-(2-phosphooxyethyl)-thiazole + 4-amino-2-methyl-5-(diphosphooxymethyl)pyrimidine + H(+) = thiamine phosphate + diphosphate. It participates in cofactor biosynthesis; thiamine diphosphate biosynthesis; thiamine phosphate from 4-amino-2-methyl-5-diphosphomethylpyrimidine and 4-methyl-5-(2-phosphoethyl)-thiazole: step 1/1. Condenses 4-methyl-5-(beta-hydroxyethyl)thiazole monophosphate (THZ-P) and 2-methyl-4-amino-5-hydroxymethyl pyrimidine pyrophosphate (HMP-PP) to form thiamine monophosphate (TMP). The sequence is that of Thiamine-phosphate synthase from Staphylococcus carnosus (strain TM300).